A 90-amino-acid polypeptide reads, in one-letter code: Acylphosphatase (90 aa).

The region spanning 5 to 90 (SFVVRVWGLV…PPKGSGFHTN (86 aa)) is the Acylphosphatase-like domain. Catalysis depends on residues Arg20 and Asn38.

The protein belongs to the acylphosphatase family.

It carries out the reaction an acyl phosphate + H2O = a carboxylate + phosphate + H(+). The polypeptide is Acylphosphatase (acyP) (Aeromonas hydrophila subsp. hydrophila (strain ATCC 7966 / DSM 30187 / BCRC 13018 / CCUG 14551 / JCM 1027 / KCTC 2358 / NCIMB 9240 / NCTC 8049)).